A 576-amino-acid polypeptide reads, in one-letter code: Trehalase 2 (576 aa).

This sequence belongs to the glycosyl hydrolase 15 family.

It catalyses the reaction alpha,alpha-trehalose + H2O = alpha-D-glucose + beta-D-glucose. Its pathway is glycan degradation; trehalose degradation; D-glucose from alpha,alpha-trehalose: step 1/1. Functionally, catalyzes the hydrolysis of alpha,alpha-trehalose into two molecules of D-glucose. The chain is Trehalase 2 (treH2) from Sulfolobus acidocaldarius (strain ATCC 33909 / DSM 639 / JCM 8929 / NBRC 15157 / NCIMB 11770).